The primary structure comprises 163 residues: Large ribosomal subunit protein uL22c (163 aa).

The protein belongs to the universal ribosomal protein uL22 family. Part of the 50S ribosomal subunit.

The protein resides in the plastid. Its subcellular location is the chloroplast. Its function is as follows. This protein binds specifically to 23S rRNA. The globular domain of the protein is located near the polypeptide exit tunnel on the outside of the subunit, while an extended beta-hairpin is found that lines the wall of the exit tunnel in the center of the 70S ribosome. The protein is Large ribosomal subunit protein uL22c (rpl22) of Lobularia maritima (Sweet alyssum).